We begin with the raw amino-acid sequence, 206 residues long: LexA repressor (206 aa).

The H-T-H motif DNA-binding region spans Arg28–Lys48. Catalysis depends on for autocatalytic cleavage activity residues Ser123 and Lys160.

This sequence belongs to the peptidase S24 family. As to quaternary structure, homodimer.

It catalyses the reaction Hydrolysis of Ala-|-Gly bond in repressor LexA.. Represses a number of genes involved in the response to DNA damage (SOS response), including recA and lexA. In the presence of single-stranded DNA, RecA interacts with LexA causing an autocatalytic cleavage which disrupts the DNA-binding part of LexA, leading to derepression of the SOS regulon and eventually DNA repair. This Vibrio atlanticus (strain LGP32) (Vibrio splendidus (strain Mel32)) protein is LexA repressor.